Reading from the N-terminus, the 1107-residue chain is Unconventional myosin-Ib (1107 aa).

The region spanning 15-701 (IGVGDMVLLE…TLFQLEDLRK (687 aa)) is the Myosin motor domain. The residue at position 60 (Ser60) is a Phosphoserine. 108 to 115 (GESGAGKT) is an ATP binding site. Lys287 participates in a covalent cross-link: Glycyl lysine isopeptide (Lys-Gly) (interchain with G-Cter in SUMO1); alternate. Residue Lys287 forms a Glycyl lysine isopeptide (Lys-Gly) (interchain with G-Cter in SUMO2); alternate linkage. The segment at 592 to 599 (YIRCIKPN) is actin-binding. IQ domains follow at residues 704 to 727 (LEDLATLIQKIYRGWKCRTHFLLM), 728 to 749 (KRSQVVIAAWYRRYAQQKRYQQ), 750 to 778 (IKSSALVIQSYIRGWKARKILRELKHQKR), 780 to 807 (KEAATTIAAYWHGTQARRELKRLKEEAR), and 808 to 837 (RKHAVAVIWAYWLGLKVRREYRKFFRANAG). The TH1 domain maps to 923–1107 (KALYPSSVGQ…NNRLLEVAVP (185 aa)).

It belongs to the TRAFAC class myosin-kinesin ATPase superfamily. Myosin family. Prominent expression is seen in the brain, lung and liver. It is also expressed in the heart and testis. A high level expression is seen in virtually all neurons (but not glia) in the postnatal and adult mouse brain and in neuroblasts of the cerebellar external granular layer.

Motor protein that may participate in process critical to neuronal development and function such as cell migration, neurite outgrowth and vesicular transport. In Mus musculus (Mouse), this protein is Unconventional myosin-Ib (Myo1b).